Reading from the N-terminus, the 461-residue chain is Homocitrate synthase (461 aa).

Positions 4-259 (VGILDSTLRE…IEVVKLDKLQ (256 aa)) constitute a Pyruvate carboxyltransferase domain. Arg-12 lines the 2-oxoglutarate pocket. A Mg(2+)-binding site is contributed by Glu-13. Positions 76, 136, and 170 each coordinate 2-oxoglutarate. Mg(2+) is bound by residues His-198 and His-200. His-292 functions as the Proton acceptor in the catalytic mechanism.

The protein belongs to the alpha-IPM synthase/homocitrate synthase family. Homocitrate synthase LYS20/LYS21 subfamily. It depends on Mg(2+) as a cofactor. The cofactor is Mn(2+).

The catalysed reaction is acetyl-CoA + 2-oxoglutarate + H2O = (2R)-homocitrate + CoA + H(+). It functions in the pathway amino-acid biosynthesis; L-lysine biosynthesis via AAA pathway; L-alpha-aminoadipate from 2-oxoglutarate: step 1/5. Its function is as follows. Catalyzes the aldol-type condensation of 2-oxoglutarate with acetyl-CoA to yield homocitrate. Carries out the first step of the alpha-aminoadipate (AAA) lysine biosynthesis pathway. The protein is Homocitrate synthase of Saccharolobus solfataricus (strain ATCC 35092 / DSM 1617 / JCM 11322 / P2) (Sulfolobus solfataricus).